Here is a 462-residue protein sequence, read N- to C-terminus: NAD-capped RNA hydrolase NUDT12 (462 aa).

Lys10 is modified (N6-succinyllysine). ANK repeat units follow at residues 11–40, 45–74, and 78–98; these read EMIS…SLLN, NGWT…DRSL, and ARQT…ANLL. Position 185 is an N6-succinyllysine (Lys185). Positions 284 and 287 each coordinate Zn(2+). At Lys292 the chain carries N6-succinyllysine. Residues Cys302 and Cys307 each coordinate Zn(2+). Substrate is bound by residues Tyr318, 354–356, Glu370, Glu374, and Glu415; that span reads AGF. The region spanning 319–453 is the Nudix hydrolase domain; the sequence is PRVDPVVIMQ…SRAIAHQLIK (135 aa). Positions 354, 370, 374, and 415 each coordinate Mg(2+). The short motif at 355–376 is the Nudix box element; sequence GFIEPGETIEDAVRREVEEESG. Residues 460–462 carry the Microbody targeting signal motif; sequence PNL.

Belongs to the Nudix hydrolase family. NudC subfamily. In terms of assembly, homodimer. Homodimerization is essential for its catalytic activity and protein stability. Interacts (via ANK repeats) with BLMH. The cofactor is Mg(2+). Zn(2+) is required as a cofactor. Expressed abundantly in the liver and kidney.

The protein resides in the cytoplasm. Its subcellular location is the peroxisome. It is found in the cytoplasmic granule. It catalyses the reaction a 5'-end NAD(+)-phospho-ribonucleoside in mRNA + H2O = a 5'-end phospho-adenosine-phospho-ribonucleoside in mRNA + beta-nicotinamide D-ribonucleotide + 2 H(+). The enzyme catalyses NAD(+) + H2O = beta-nicotinamide D-ribonucleotide + AMP + 2 H(+). The catalysed reaction is NADH + H2O = reduced beta-nicotinamide D-ribonucleotide + AMP + 2 H(+). It carries out the reaction NADPH + H2O = reduced beta-nicotinamide D-ribonucleotide + adenosine 2',5'-bisphosphate + 2 H(+). In terms of biological role, mRNA decapping enzyme that specifically removes the nicotinamide adenine dinucleotide (NAD) cap from a subset of mRNAs by hydrolyzing the diphosphate linkage to produce nicotinamide mononucleotide (NMN) and 5' monophosphate mRNA. The NAD-cap is present at the 5'-end of some RNAs; in contrast to the canonical N7 methylguanosine (m7G) cap, the NAD cap promotes mRNA decay. Preferentially acts on NAD-capped transcripts in response to nutrient stress. Also acts on free nicotinamide adenine dinucleotide molecules: hydrolyzes NAD(H) into NMN(H) and AMP, and NADPH into NMNH and 2',5'-ADP. May act to regulate the concentration of peroxisomal nicotinamide nucleotide cofactors required for oxidative metabolism in this organelle. Regulates the levels of circadian clock components PER1, PER2, PER3 and CRY2 in the liver. The polypeptide is NAD-capped RNA hydrolase NUDT12 (Mus musculus (Mouse)).